Here is a 416-residue protein sequence, read N- to C-terminus: Serine hydroxymethyltransferase 1 (416 aa).

Residues Leu121 and 125–127 (GHL) each bind (6S)-5,6,7,8-tetrahydrofolate. Residue Lys229 is modified to N6-(pyridoxal phosphate)lysine. (6S)-5,6,7,8-tetrahydrofolate contacts are provided by residues Glu245 and 354-356 (SPF).

This sequence belongs to the SHMT family. Homodimer. The cofactor is pyridoxal 5'-phosphate.

It localises to the cytoplasm. The catalysed reaction is (6R)-5,10-methylene-5,6,7,8-tetrahydrofolate + glycine + H2O = (6S)-5,6,7,8-tetrahydrofolate + L-serine. The protein operates within one-carbon metabolism; tetrahydrofolate interconversion. Its pathway is amino-acid biosynthesis; glycine biosynthesis; glycine from L-serine: step 1/1. Catalyzes the reversible interconversion of serine and glycine with tetrahydrofolate (THF) serving as the one-carbon carrier. This reaction serves as the major source of one-carbon groups required for the biosynthesis of purines, thymidylate, methionine, and other important biomolecules. Also exhibits THF-independent aldolase activity toward beta-hydroxyamino acids, producing glycine and aldehydes, via a retro-aldol mechanism. The polypeptide is Serine hydroxymethyltransferase 1 (Photobacterium profundum (strain SS9)).